Here is a 611-residue protein sequence, read N- to C-terminus: MAPVRDPNTLSNYNEWRTKHTTADFKVDFTAKCLRGSVVLELESQTDKASKEIILDSSYVDVSAITLNSTPSQWEVRDRTGPSGSPVRVAVPNGAGKGEVVKLEIELATTDKCTALQWLTPAQTSNKKAPFMFSQCQAIHARSIFPCQDTPDVKSTYDFIIRSPHVVVASGVPVPGEPESVGEDKVYKFHQKVPIPSYLFAVASGDIASAKIGRCSSVATGPNELKASQWELEDDMDKFLDAAEKIVFPYQWGEYNVLVLPPSFPYGGMENPIFTFATPTIISGDRQNIDVIAHELAHSWSGNLVTSCSWEHFWLNEGWTVYLERRILASIHKNDSYFDFSAIIGWKHLEEAIEEFGKDHEYTKLSIKHDGIDPDDAFSSVPYEKGFHFIWSLDRLVGRENFDKFIPHYFSKWQNKSLDSFEFKDTFLEFFSAPEYSKLKDKISQIDWEGRFFNPGLPPKPEFDTTLVDGCFQLANKWKSKDFSPSPSDTSSWTGNQLLVFLNVVQDFEEPLTAEQSQNMGKIYALADSKNVELKAAYYQIAMKAKDTTSYPGVAELLGNVGRMKFVRTLFRTLNKVDRDLAVKTFQKNRDFYHPICRQLVEKDLGLGESK.

Residues glutamine 135–glutamine 137 and proline 265–glutamate 270 contribute to the a peptide site. Histidine 294 contacts Zn(2+). Glutamate 295 (proton acceptor) is an active-site residue. 2 residues coordinate Zn(2+): histidine 298 and glutamate 317. The active-site Proton donor is the tyrosine 383.

This sequence belongs to the peptidase M1 family. Zn(2+) serves as cofactor.

It is found in the cytoplasm. Its subcellular location is the nucleus. The catalysed reaction is an epoxide + H2O = an ethanediol. Aminopeptidase that preferentially cleaves di- and tripeptides. Also has low epoxide hydrolase activity (in vitro). Can hydrolyze the epoxide leukotriene LTA(4) but it forms preferentially 5,6-dihydroxy-7,9,11,14-eicosatetraenoic acid rather than the cytokine leukotriene B(4) as the product compared to the homologous mammalian enzyme (in vitro). In Chaetomium globosum (strain ATCC 6205 / CBS 148.51 / DSM 1962 / NBRC 6347 / NRRL 1970) (Soil fungus), this protein is Leucine aminopeptidase 2.